A 115-amino-acid polypeptide reads, in one-letter code: NADH-ubiquinone oxidoreductase chain 3 (115 aa).

The next 3 membrane-spanning stretches (helical) occupy residues 3-23 (LILT…IAFW), 55-75 (FFLV…LLPL), and 86-106 (TMLT…AYEW).

The protein belongs to the complex I subunit 3 family. In terms of assembly, core subunit of respiratory chain NADH dehydrogenase (Complex I) which is composed of 45 different subunits. Interacts with TMEM186. Interacts with TMEM242.

Its subcellular location is the mitochondrion inner membrane. The catalysed reaction is a ubiquinone + NADH + 5 H(+)(in) = a ubiquinol + NAD(+) + 4 H(+)(out). Its function is as follows. Core subunit of the mitochondrial membrane respiratory chain NADH dehydrogenase (Complex I) which catalyzes electron transfer from NADH through the respiratory chain, using ubiquinone as an electron acceptor. Essential for the catalytic activity of complex I. In Rhinoceros unicornis (Greater Indian rhinoceros), this protein is NADH-ubiquinone oxidoreductase chain 3.